Reading from the N-terminus, the 183-residue chain is UPF0316 protein EF_1609 (183 aa).

Helical transmembrane passes span 1–21 (MVVD…YITL), 35–55 (VIAP…LSMV), and 62–82 (PLNL…GIKI).

This sequence belongs to the UPF0316 family.

Its subcellular location is the cell membrane. This chain is UPF0316 protein EF_1609, found in Enterococcus faecalis (strain ATCC 700802 / V583).